Reading from the N-terminus, the 333-residue chain is Terminal uridylyltransferase 4 (333 aa).

UTP-binding positions include Ser-54 and Ser-65–Asp-68. Residues Asp-66 and Asp-68 each coordinate Mg(2+). Arg-121 is a binding site for RNA. UTP-binding positions include Gly-144 to Ser-148, Lys-169, Lys-173, and Ser-188 to Tyr-189. Residues Leu-237–Asn-302 form the PAP-associated domain.

The protein belongs to the DNA polymerase type-B-like family. As to quaternary structure, monomer. Mg(2+) serves as cofactor. Requires Mn(2+) as cofactor.

It catalyses the reaction RNA(n) + UTP = RNA(n)-3'-uridine ribonucleotide + diphosphate. Its activity is regulated as follows. The 3' uridylated RNA substrate is involved in the selective incorporation of UTP; UTP binding is favored due to the constraint posed on the positioning of the NTP base by the continuous stacking interactions between Tyr-189 side chain, the bound NTP, and the terminal nucleoside base of the RNA substrate. In terms of biological role, terminal uridylyltransferase which, specifically, catalyzes the addition of Us to the 3'-hydroxyl group of single-stranded RNAs with a 3'-terminal U. The chain is Terminal uridylyltransferase 4 from Trypanosoma brucei brucei (strain 927/4 GUTat10.1).